The sequence spans 327 residues: Aspartate--ammonia ligase (327 aa).

It belongs to the class-II aminoacyl-tRNA synthetase family. AsnA subfamily.

The protein localises to the cytoplasm. It catalyses the reaction L-aspartate + NH4(+) + ATP = L-asparagine + AMP + diphosphate + H(+). It functions in the pathway amino-acid biosynthesis; L-asparagine biosynthesis; L-asparagine from L-aspartate (ammonia route): step 1/1. This Bacillus cereus (strain B4264) protein is Aspartate--ammonia ligase.